The chain runs to 1002 residues: Vacuolar protein sorting-associated protein 18 homolog (1002 aa).

Ser344 carries the phosphoserine modification. The CHCR repeat unit spans residues 650-804 (LMAQGSRLEV…DIKGTNDVKK (155 aa)). Residues 827-880 (FEKIDNFKEAICDALRDYNQRIQELQREMAETTEQTDRVTAELQQLRQHSLTVE) adopt a coiled-coil conformation. The RING-type; degenerate zinc finger occupies 885-924 (CEICEMMLLVKPFFIFICGHKFHSDCLEKHVVPLLTKEQC).

The protein belongs to the VPS18 family. As to quaternary structure, component of the class C core vacuole/endosome tethering (CORVET) complex composed of at least Vps8, dor/Vps18, car/Vps33A and Vps16A; unlike in other species, Vps11 is not part of the Drosophila complex. Due to the reduced number of components the Drosophila CORVET complex is often referred to as the miniCORVET complex. Interacts with car/Vps33A. Interacts with ema. Component of the homotypic fusion and vacuole protein sorting (HOPS) complex, composed of Vps16A, car/Vps33A, dor/Vps18, Vps39, Vps11 and lt/Vps41. The tethering complex core made up of Vps16A, car/Vps33A and dor/Vps18 and shared by both HOPS and CORVET, preferentially associates with CORVET-specific Vps8 over HOPS-specific lt/Vps41. Interacts with Syx17 (via SNARE domain); the interaction may involve multiple components of the HOPS complex and may promote assembly of the Syx17-Snap29-Vamp7 trans-SNARE complex.

It is found in the early endosome. The protein localises to the late endosome membrane. The protein resides in the lysosome membrane. Its subcellular location is the cytoplasmic vesicle. It localises to the autophagosome. Functionally, core component of the class C core vacuole/endosome tethering (CORVET) and the homotypic fusion and vacuole protein sorting (HOPS) tethering complexes involved in endo-lysosomal vesicle trafficking and lysosome biogenesis. The CORVET complex facilitates docking and fusion of endosomal vesicles during endosome maturation, acts upstream of HOPS, but is not involved in autophagic flux. The CORVET complex may cooperate with the early endosomal tether Rbsn-5 to mediate endosomal fusion. The HOPS complex facilitates docking and fusion of lysosomes with late endosomes and several other types of vesicles. The HOPS complex is also involved in autophagy and crinophagy (the elimination of unused secretory granules through their fusion with lysosomes). The HOPS complex mediates autophagocitic flux, probably by binding autophagosome-associated Syx17/syntaxin 17, promoting assembly of the trans-SNARE complex and instigating autophagosome-lysosome fusion. Independent of Syx17/syntaxin 17, HOPS is involved in biosynthetic transport to lysosomes and lysosome-related organelles such as eye-pigment granules. Required for endocytic degradation of boss/bride of sevenless and N/Notch in developing ommatidia. Required for autophagocytosis-dependent remodeling of myofibrils and transverse-tubules (T-tubules) during metamorphosis. In larval neuromuscular junctions, essential for endosomal sorting that traffics old or dysfunctional synaptic vesicle proteins through a degradative endolysosomal route. Required to maintain normal levels of rush, which functions in endosome formation and trafficking. The chain is Vacuolar protein sorting-associated protein 18 homolog from Drosophila melanogaster (Fruit fly).